Here is a 330-residue protein sequence, read N- to C-terminus: Ferredoxin--NADP reductase (330 aa).

8 residues coordinate FAD: T19, D38, Q46, Y51, A91, F129, D286, and S327.

This sequence belongs to the ferredoxin--NADP reductase type 2 family. Homodimer. Requires FAD as cofactor.

The catalysed reaction is 2 reduced [2Fe-2S]-[ferredoxin] + NADP(+) + H(+) = 2 oxidized [2Fe-2S]-[ferredoxin] + NADPH. This chain is Ferredoxin--NADP reductase, found in Nocardioides sp. (strain ATCC BAA-499 / JS614).